We begin with the raw amino-acid sequence, 591 residues long: Alternative cytochrome c oxidase subunit 1 (591 aa).

The helical transmembrane segment at 40–60 (VIAIQYSLTASAIGLVALVLS) threads the bilayer. A heme b-binding site is contributed by His88. The next 11 helical transmembrane spans lie at 90–110 (MIMVIYLLTALFLGGFGNYLI), 126–146 (MLSYWVYLLAVLVLASAFFVP), 172–192 (GIVLMLSSLILFIIGFTMGGL), 215–235 (VWGIFTATVMALLAFPALFVG), 274–294 (LFWFFGHPEVYIVALPAFGIV), 313–333 (VWAIVAIGALSFVVWAHHMYV), 337–357 (YPYFGFFFATTTLIIAIPTAI), 377–397 (MLFALGFIITFVNGGLTGLFL), 412–432 (VVAHFHMVMGVAPIMVVLGAI), 453–473 (FWVTFLGAYLIFFPMHYLGLL), and 498–518 (FITVVALTVGFAQMVFLFNLV). Cu cation contacts are provided by His280, Tyr284, His329, and His330. Residues 280 to 284 (HPEVY) constitute a cross-link (1'-histidyl-3'-tyrosine (His-Tyr)). Residues His415 and His417 each contribute to the heme b site.

Belongs to the heme-copper respiratory oxidase family. As to quaternary structure, this alternate cytochrome c oxidase consists of a subunit I and two cytochromes c. Equivalents to subunit 2 and 3 are not present in this complex.

The protein resides in the cell membrane. The catalysed reaction is 4 Fe(II)-[cytochrome c] + O2 + 8 H(+)(in) = 4 Fe(III)-[cytochrome c] + 2 H2O + 4 H(+)(out). In terms of biological role, cytochrome c oxidase is the component of the respiratory chain that catalyzes the reduction of oxygen to water. Subunits 1-3 form the functional core of the enzyme complex. Co I is the catalytic subunit of the enzyme. Electrons originating in cytochrome c are transferred via the copper A center of subunit 2 and a low-spin heme of subunit 1 to the bimetallic center formed by a high-spin heme and copper B. This Bradyrhizobium diazoefficiens (strain JCM 10833 / BCRC 13528 / IAM 13628 / NBRC 14792 / USDA 110) protein is Alternative cytochrome c oxidase subunit 1 (coxN).